The sequence spans 98 residues: MEIELSNNAVSWFKEELELPEGDKVLQFFVRYGGEFQLKQGFSPAFSVDKKEDVEIGYENHYDGLDVVIAEKDLWYFEDHNLFIDVNDGIDEISYATK.

The protein belongs to the HesB/IscA family.

This is an uncharacterized protein from Staphylococcus saprophyticus subsp. saprophyticus (strain ATCC 15305 / DSM 20229 / NCIMB 8711 / NCTC 7292 / S-41).